The primary structure comprises 236 residues: DNA repair protein RecO (236 aa).

Belongs to the RecO family.

Involved in DNA repair and RecF pathway recombination. This Haemophilus influenzae (strain PittGG) protein is DNA repair protein RecO.